We begin with the raw amino-acid sequence, 30 residues long: Unknown protein from spot 365 of 2D-PAGE of etiolated coleoptile (30 aa).

It belongs to the zinc-containing alcohol dehydrogenase family.

In Zea mays (Maize), this protein is Unknown protein from spot 365 of 2D-PAGE of etiolated coleoptile.